We begin with the raw amino-acid sequence, 504 residues long: Probable cytochrome P450 513F1 (504 aa).

The helical transmembrane segment at 1-21 (MILSLLFLFVITLYFLIPSRI) threads the bilayer. A heme-binding site is contributed by Cys449.

The protein belongs to the cytochrome P450 family. Requires heme as cofactor.

The protein resides in the membrane. This Dictyostelium discoideum (Social amoeba) protein is Probable cytochrome P450 513F1 (cyp513F1).